The chain runs to 87 residues: Large ribosomal subunit protein eL33 (87 aa).

The protein belongs to the eukaryotic ribosomal protein eL33 family.

The chain is Large ribosomal subunit protein eL33 from Pyrococcus woesei.